A 524-amino-acid chain; its full sequence is Ribosomal protein uS12 methylthiotransferase RimO (524 aa).

Positions 20–31 (NSQTASDSTQPA) are enriched in polar residues. The disordered stretch occupies residues 20–59 (NSQTASDSTQPAASAYHHKANHNQNRSIEQSAQQAAEQSL). The span at 48-58 (EQSAQQAAEQS) shows a compositional bias: low complexity. The MTTase N-terminal domain maps to 67 to 177 (PKVGFVSLGC…VITAVSTHAP (111 aa)). Residues cysteine 76, cysteine 112, cysteine 141, cysteine 216, cysteine 220, and cysteine 223 each coordinate [4Fe-4S] cluster. The Radical SAM core domain maps to 202-443 (LTPSHYAYLK…MAVQQQISEQ (242 aa)). One can recognise a TRAM domain in the interval 446 to 519 (QEKVGKTMTV…EYDLFASYDA (74 aa)).

This sequence belongs to the methylthiotransferase family. RimO subfamily. It depends on [4Fe-4S] cluster as a cofactor.

The protein localises to the cytoplasm. It catalyses the reaction L-aspartate(89)-[ribosomal protein uS12]-hydrogen + (sulfur carrier)-SH + AH2 + 2 S-adenosyl-L-methionine = 3-methylsulfanyl-L-aspartate(89)-[ribosomal protein uS12]-hydrogen + (sulfur carrier)-H + 5'-deoxyadenosine + L-methionine + A + S-adenosyl-L-homocysteine + 2 H(+). Its function is as follows. Catalyzes the methylthiolation of an aspartic acid residue of ribosomal protein uS12. The chain is Ribosomal protein uS12 methylthiotransferase RimO from Psychrobacter sp. (strain PRwf-1).